The following is a 596-amino-acid chain: Two-component response regulator ARR12 (596 aa).

Positions 18 to 133 (RVLAVDDDQT…ELKNIWQHVV (116 aa)) constitute a Response regulatory domain. Asp69 is subject to 4-aspartylphosphate. The span at 138-153 (DKNRGSNNNGDKRDGS) shows a compositional bias: basic and acidic residues. A disordered region spans residues 138-192 (DKNRGSNNNGDKRDGSGNEGVGNSDQNNGKGNRKRKDQYNEDEDEDRDDNDDSCA). Residues 158–167 (VGNSDQNNGK) are compositionally biased toward polar residues. Over residues 177-189 (NEDEDEDRDDNDD) the composition is skewed to acidic residues. The short motif at 194–197 (KKQR) is the Nuclear localization signal element. The segment at residues 197–247 (RVVWTVELHKKFVAAVNQLGYEKAMPKKILDLMNVEKLTRENVASHLQKFR) is a DNA-binding region (myb-like GARP). Residues 437–467 (NAVSSSTHPPPPAHNSNSINHQFDVSPLPHS) form a disordered region. The span at 450–459 (HNSNSINHQF) shows a compositional bias: polar residues.

It belongs to the ARR family. Type-B subfamily. As to quaternary structure, binds the target DNA as a monomer. Post-translationally, two-component system major event consists of a His-to-Asp phosphorelay between a sensor histidine kinase (HK) and a response regulator (RR). In plants, the His-to-Asp phosphorelay involves an additional intermediate named Histidine-containing phosphotransfer protein (HPt). This multistep phosphorelay consists of a His-Asp-His-Asp sequential transfer of a phosphate group between first a His and an Asp of the HK protein, followed by the transfer to a conserved His of the HPt protein and finally the transfer to an Asp in the receiver domain of the RR protein. In terms of tissue distribution, detected in the whole plant. Predominantly expressed in leaves. Expressed at the root transition zone.

The protein resides in the nucleus. Functionally, transcriptional activator that binds specifically to the DNA sequence 5'-[AG]GATT-3'. Functions as a response regulator involved in His-to-Asp phosphorelay signal transduction system. Phosphorylation of the Asp residue in the receiver domain activates the ability of the protein to promote the transcription of target genes. Could directly activate some type-A response regulators in response to cytokinins. Involved in the root-meristem size determination through the regulation of cell differentiation. Involved in activating SHY2 during meristem growth and controls PIN expression via activation of SHY2. This chain is Two-component response regulator ARR12 (ARR12), found in Arabidopsis thaliana (Mouse-ear cress).